A 167-amino-acid polypeptide reads, in one-letter code: Small ribosomal subunit protein uS9 (167 aa).

Positions lysine 136–arginine 167 are disordered. Over residues arginine 143–lysine 152 the composition is skewed to basic and acidic residues. Residues tyrosine 153–arginine 167 show a composition bias toward basic residues.

Belongs to the universal ribosomal protein uS9 family.

This Nocardia farcinica (strain IFM 10152) protein is Small ribosomal subunit protein uS9.